A 201-amino-acid chain; its full sequence is Recombination protein RecR (201 aa).

A C4-type zinc finger spans residues cysteine 55–cysteine 70. One can recognise a Toprim domain in the interval glycine 78 to proline 173.

The protein belongs to the RecR family.

Its function is as follows. May play a role in DNA repair. It seems to be involved in an RecBC-independent recombinational process of DNA repair. It may act with RecF and RecO. This is Recombination protein RecR from Treponema pallidum (strain Nichols).